Here is a 312-residue protein sequence, read N- to C-terminus: Methionyl-tRNA formyltransferase (312 aa).

Residue 113–116 (SILP) participates in (6S)-5,6,7,8-tetrahydrofolate binding.

Belongs to the Fmt family.

It carries out the reaction L-methionyl-tRNA(fMet) + (6R)-10-formyltetrahydrofolate = N-formyl-L-methionyl-tRNA(fMet) + (6S)-5,6,7,8-tetrahydrofolate + H(+). In terms of biological role, attaches a formyl group to the free amino group of methionyl-tRNA(fMet). The formyl group appears to play a dual role in the initiator identity of N-formylmethionyl-tRNA by promoting its recognition by IF2 and preventing the misappropriation of this tRNA by the elongation apparatus. This Hydrogenovibrio crunogenus (strain DSM 25203 / XCL-2) (Thiomicrospira crunogena) protein is Methionyl-tRNA formyltransferase.